The primary structure comprises 226 residues: MNLLIPAAGIGRRMGGSRNKLLLTLLGKSLLSWTLEAAVKSDHITWIGIIGQPIDFPDFQKNISDLSTDKHIELIEGGATRQESVYNGLQALPSAAERVLIHDGARCLATPELLDRCAVEILKCPGIIASVPVKDTIKVVDPSGIIQDTPNRRNLWAAQTPQGFDVKLLKECHKKGQILGWEVTDDAALFEKCGLPVKILEGEETNLKVTTPLDLKIAEFILLKAL.

Belongs to the IspD/TarI cytidylyltransferase family. IspD subfamily.

The catalysed reaction is 2-C-methyl-D-erythritol 4-phosphate + CTP + H(+) = 4-CDP-2-C-methyl-D-erythritol + diphosphate. Its pathway is isoprenoid biosynthesis; isopentenyl diphosphate biosynthesis via DXP pathway; isopentenyl diphosphate from 1-deoxy-D-xylulose 5-phosphate: step 2/6. Catalyzes the formation of 4-diphosphocytidyl-2-C-methyl-D-erythritol from CTP and 2-C-methyl-D-erythritol 4-phosphate (MEP). This is 2-C-methyl-D-erythritol 4-phosphate cytidylyltransferase from Trichodesmium erythraeum (strain IMS101).